A 541-amino-acid polypeptide reads, in one-letter code: Carboxypeptidase Y homolog A (541 aa).

A signal peptide spans 1–17; the sequence is MKTFTAALLVGTALAAV. Residues 18–122 constitute a propeptide that is removed on maturation; it reads PQQQPLQTQV…KLENYDLRVK (105 aa). 5 disulfide bridges follow: Cys177–Cys416, Cys311–Cys325, Cys335–Cys358, Cys342–Cys351, and Cys380–Cys386. N-linked (GlcNAc...) asparagine glycosylation is present at Asn208. Residue Ser264 is part of the active site. Asp455 is a catalytic residue. Residues Asn485, Asn491, and Asn506 are each glycosylated (N-linked (GlcNAc...) asparagine). His517 is an active-site residue.

Belongs to the peptidase S10 family.

It is found in the vacuole. The enzyme catalyses Release of a C-terminal amino acid with broad specificity.. In terms of biological role, vacuolar carboxypeptidase involved in degradation of small peptides. Digests preferentially peptides containing an aliphatic or hydrophobic residue in P1' position, as well as methionine, leucine or phenylalanine in P1 position of ester substrate. The chain is Carboxypeptidase Y homolog A (cpyA) from Uncinocarpus reesii (strain UAMH 1704).